A 106-amino-acid chain; its full sequence is Iron-sulfur cluster assembly protein CyaY (106 aa).

It belongs to the frataxin family.

Functionally, involved in iron-sulfur (Fe-S) cluster assembly. May act as a regulator of Fe-S biogenesis. This Escherichia coli O139:H28 (strain E24377A / ETEC) protein is Iron-sulfur cluster assembly protein CyaY.